The sequence spans 369 residues: Beta-1,3-galactosyltransferase 9 (369 aa).

Topologically, residues 1–12 (MQVTFCRLRTHQ) are cytoplasmic. The helical; Signal-anchor for type II membrane protein transmembrane segment at 13–33 (WCFILFNVILFHALLFGTDFV) threads the bilayer. Residues 34-369 (EEYFLHSLPY…IKNNLMYFAD (336 aa)) are Lumenal-facing. 3 N-linked (GlcNAc...) asparagine glycosylation sites follow: Asn-66, Asn-96, and Asn-109.

This sequence belongs to the glycosyltransferase 31 family.

The protein resides in the golgi apparatus membrane. Its function is as follows. Putative glycosyltransferase that could catalyze the transfer of galactose residues from UDP-alpha-D-galactose. The chain is Beta-1,3-galactosyltransferase 9 from Homo sapiens (Human).